A 270-amino-acid chain; its full sequence is Orotidine 5'-phosphate decarboxylase (270 aa).

Substrate contacts are provided by residues aspartate 43, 65 to 67 (KTH), 96 to 105 (DRKFGDIGST), tyrosine 217, and arginine 236. The active-site Proton donor is the lysine 98.

It belongs to the OMP decarboxylase family.

It catalyses the reaction orotidine 5'-phosphate + H(+) = UMP + CO2. It functions in the pathway pyrimidine metabolism; UMP biosynthesis via de novo pathway; UMP from orotate: step 2/2. This chain is Orotidine 5'-phosphate decarboxylase (URA3), found in Aureobasidium pullulans (Black yeast).